A 122-amino-acid chain; its full sequence is HLLQFGDLIDKIAGRSGFWYYGFYGCYCGLGGRGRPQDATDRCCFVHDCCYGKVTGCDPKKDIYTYSEENGAIVCGGDNPCKKEICECDRDAAICFRDNLDTYDNKYWLFPNKYCKEESEPC.

7 disulfide bridges follow: Cys-26/Cys-115, Cys-28/Cys-44, Cys-43/Cys-95, Cys-49/Cys-122, Cys-50/Cys-88, Cys-57/Cys-81, and Cys-75/Cys-86. Positions 27, 29, and 31 each coordinate Ca(2+). His-47 is an active-site residue. A Ca(2+)-binding site is contributed by Asp-48. Asp-89 is a catalytic residue.

Ca(2+) serves as cofactor. As to expression, expressed by the venom gland.

The protein localises to the secreted. The catalysed reaction is a 1,2-diacyl-sn-glycero-3-phosphocholine + H2O = a 1-acyl-sn-glycero-3-phosphocholine + a fatty acid + H(+). Its function is as follows. PLA2 catalyzes the calcium-dependent hydrolysis of the 2-acyl groups in 3-sn-phosphoglycerides. In Lachesis stenophrys (Central American bushmaster), this protein is Acidic phospholipase A2.